The chain runs to 106 residues: ATP-dependent Clp protease adapter protein ClpS (106 aa).

It belongs to the ClpS family. As to quaternary structure, binds to the N-terminal domain of the chaperone ClpA.

Its function is as follows. Involved in the modulation of the specificity of the ClpAP-mediated ATP-dependent protein degradation. This chain is ATP-dependent Clp protease adapter protein ClpS, found in Sodalis glossinidius (strain morsitans).